Consider the following 1024-residue polypeptide: Protein tiptop (1024 aa).

The span at 20–35 (ELTSPRCQSRDSNTSA) shows a compositional bias: polar residues. Disordered stretches follow at residues 20–40 (ELTS…AGAG) and 138–215 (EGEV…ISAD). Acidic residues predominate over residues 159 to 175 (DDQEEDQEQDQEQEQEQ). Residues 317–341 (FKCVWCKQSFSTLANLTAHMKETQH) form a C2H2-type 1 zinc finger. Positions 350-392 (LPTGGVGTPSAPPPTRLATSASNSACSSSSSSTSSSSNSSKSE) are disordered. Residues 368 to 391 (TSASNSACSSSSSSTSSSSNSSKS) show a composition bias toward low complexity. A C2H2-type 2 zinc finger spans residues 426–450 (LKCMWCGQSFRSLAEMTSHMQETQH). Disordered regions lie at residues 466 to 489 (GDER…SSPS), 519 to 576 (AQKS…SLDS), 712 to 759 (SRDR…IKAE), 786 to 818 (FSME…SLLA), and 868 to 891 (ETTD…ASAT). Residues 477 to 489 (VPSTSTAAPSSPS) are compositionally biased toward low complexity. The segment at 499–523 (LTCKVCDQAFGSLKELSTHMAQKSH) adopts a C2H2-type 3 zinc-finger fold. Residues 527-537 (SPAPSASPPAA) are compositionally biased toward low complexity. Positions 543-558 (KRGRQNRNEKRKKSLP) are enriched in basic residues. Positions 718–729 (SESSSASRVESS) are enriched in low complexity. The segment covering 745-755 (TPAPPPPPPPT) has biased composition (pro residues). Over residues 786–795 (FSMEACRESP) the composition is skewed to basic and acidic residues. Residues 796 to 808 (RSVSKSPAPQTER) show a composition bias toward polar residues. Positions 874-891 (STGLRSASSAGSSTASAT) are enriched in low complexity. The segment at 926–949 (IKCSYCDTPFASKGAYRHHLSKVH) adopts a C2H2-type 4 zinc-finger fold. The segment at 954-1004 (AGEDSPRLKSPAVQSPRSMPLASPRRSASRSPATGSQQPPPSPTISPYDES) is disordered. Residues 968–990 (SPRSMPLASPRRSASRSPATGSQ) show a composition bias toward low complexity.

It belongs to the teashirt C2H2-type zinc-finger protein family. Expression in the Malpighian tubules (MTs) and stomatogastric nervous system starts at embryonic stage 10. At stage 11, expression in the head domain is initiated in the clypeolabrum in two bilaterally symmetric clusters of cells. At stage 12, expression appears in the central nervous system (CNS) of the trunk and the epidermis. The staining in the hindgut is maintained throughout embryogenesis. At stage 13, expression is present in elongating MTs. The anterior staining is detected in cells that invaginate into the stomodeum and by stage 15 onwards, in cells close to the pharynx. Also expressed in cells of the brain, the second constriction of the gut, the trunk epidermis, the anterior segments of the CNS (the three thoracic and the first two abdominal segments) and in the MTs. From stage 12 onwards, tsh and tio are colocalized in some cells.

It is found in the nucleus. In terms of biological role, tiptop (tio) and teashirt (tsh) have, on the whole, common activities. Tio and tsh repress each other's expression and tsh has a crucial role for trunk patterning that is in part masked by ectopic expression of tiptop. Both genes share a common activity required for the activation of Ser and svb and the maintenance of en and wg. The polypeptide is Protein tiptop (tio) (Drosophila melanogaster (Fruit fly)).